A 276-amino-acid chain; its full sequence is Shikimate dehydrogenase (NADP(+)) (276 aa).

Shikimate contacts are provided by residues 15–17 (SKS) and Thr-62. Lys-66 functions as the Proton acceptor in the catalytic mechanism. The shikimate site is built by Asn-87 and Asp-103. NADP(+)-binding positions include 127–131 (GAGGA), 151–156 (NRTLSK), and Met-215. Tyr-217 contributes to the shikimate binding site. Gly-239 lines the NADP(+) pocket.

This sequence belongs to the shikimate dehydrogenase family. In terms of assembly, homodimer.

The catalysed reaction is shikimate + NADP(+) = 3-dehydroshikimate + NADPH + H(+). Its pathway is metabolic intermediate biosynthesis; chorismate biosynthesis; chorismate from D-erythrose 4-phosphate and phosphoenolpyruvate: step 4/7. Its function is as follows. Involved in the biosynthesis of the chorismate, which leads to the biosynthesis of aromatic amino acids. Catalyzes the reversible NADPH linked reduction of 3-dehydroshikimate (DHSA) to yield shikimate (SA). This is Shikimate dehydrogenase (NADP(+)) from Cellvibrio japonicus (strain Ueda107) (Pseudomonas fluorescens subsp. cellulosa).